The chain runs to 188 residues: Der GTPase-activating protein YihI (188 aa).

2 disordered regions span residues 1 to 80 (MKQP…VPVP) and 162 to 188 (DEDDVEREEKQEDILQLLKRGNPKDTF). Residues 27-37 (TRDELDAEARD) are compositionally biased toward basic and acidic residues. The segment covering 47–57 (NRSGARTNVEG) has biased composition (polar residues).

This sequence belongs to the YihI family. In terms of assembly, interacts with Der.

Functionally, a GTPase-activating protein (GAP) that modifies Der/EngA GTPase function. May play a role in ribosome biogenesis. The protein is Der GTPase-activating protein YihI of Yersinia pseudotuberculosis serotype O:3 (strain YPIII).